The sequence spans 389 residues: Na(+)/H(+) antiporter NhaA (389 aa).

Helical transmembrane passes span 17–37 (ILLL…LAGL), 59–79 (LLLW…GLEV), 95–115 (SLPT…YLLF), 124–144 (AGWA…MALL), 154–174 (VFLL…IALF), 177–197 (TDLS…LVAL), 213–233 (LVLW…GVII), 261–281 (FLIL…NMSL), 287–307 (PVPV…VMLF), 328–348 (IAPV…IASL), and 363–383 (LGTL…LSKV).

The protein belongs to the NhaA Na(+)/H(+) (TC 2.A.33) antiporter family.

Its subcellular location is the cell inner membrane. The catalysed reaction is Na(+)(in) + 2 H(+)(out) = Na(+)(out) + 2 H(+)(in). In terms of biological role, na(+)/H(+) antiporter that extrudes sodium in exchange for external protons. This Shewanella sp. (strain MR-7) protein is Na(+)/H(+) antiporter NhaA.